The sequence spans 240 residues: Aquaporin Z (240 aa).

2 consecutive transmembrane segments (helical) span residues 10–30 (AIGTFWLTFAGCGSAVIAAGF) and 35–55 (IGLVGVSLAFGLSVVTMAYAI). Residues 64–66 (NPA) carry the NPA 1 motif. 3 helical membrane-spanning segments follow: residues 82-102 (ILPYVIAQVCGAIVAAELLYI), 131-151 (MMACFLTEVVMTMMFLFIIMG), and 160-180 (GFAPLAIGLALVMIHLVSIPV). The NPA 2 motif lies at 186-188 (NPA). The chain crosses the membrane as a helical span at residues 194-214 (ALFVGGWAMAQLWLFWVAPLI).

It belongs to the MIP/aquaporin (TC 1.A.8) family. In terms of assembly, homotetramer.

The protein localises to the cell inner membrane. It catalyses the reaction H2O(in) = H2O(out). Its function is as follows. Channel that permits osmotically driven movement of water in both directions. It is involved in the osmoregulation and in the maintenance of cell turgor during volume expansion in rapidly growing cells. It mediates rapid entry or exit of water in response to abrupt changes in osmolarity. The protein is Aquaporin Z of Bradyrhizobium diazoefficiens (strain JCM 10833 / BCRC 13528 / IAM 13628 / NBRC 14792 / USDA 110).